The chain runs to 509 residues: 2,3-bisphosphoglycerate-independent phosphoglycerate mutase (509 aa).

Aspartate 12 and serine 62 together coordinate Mn(2+). The active-site Phosphoserine intermediate is serine 62. Substrate is bound by residues histidine 123, 153–154, arginine 185, arginine 191, 260–263, and lysine 333; these read RD and RPDR. Mn(2+) is bound by residues aspartate 400, histidine 404, aspartate 441, histidine 442, and histidine 460.

The protein belongs to the BPG-independent phosphoglycerate mutase family. In terms of assembly, monomer. The cofactor is Mn(2+).

The enzyme catalyses (2R)-2-phosphoglycerate = (2R)-3-phosphoglycerate. Its pathway is carbohydrate degradation; glycolysis; pyruvate from D-glyceraldehyde 3-phosphate: step 3/5. In terms of biological role, catalyzes the interconversion of 2-phosphoglycerate and 3-phosphoglycerate. This is 2,3-bisphosphoglycerate-independent phosphoglycerate mutase from Clostridium botulinum (strain Langeland / NCTC 10281 / Type F).